Consider the following 130-residue polypeptide: Small ribosomal subunit protein uS8 (130 aa).

Belongs to the universal ribosomal protein uS8 family.

The polypeptide is Small ribosomal subunit protein uS8 (RPS15A) (Strongylocentrotus purpuratus (Purple sea urchin)).